The primary structure comprises 286 residues: Polyamine aminopropyltransferase (286 aa).

The 234-residue stretch at 5–238 (TMWHETLHDQ…GIMTFAWATD (234 aa)) folds into the PABS domain. Residue Q33 participates in S-methyl-5'-thioadenosine binding. Spermidine-binding residues include H64 and D88. S-methyl-5'-thioadenosine is bound by residues E108 and 140 to 141 (DG). D158 functions as the Proton acceptor in the catalytic mechanism. Residue 158–161 (DCTD) coordinates spermidine. P165 contributes to the S-methyl-5'-thioadenosine binding site.

The protein belongs to the spermidine/spermine synthase family. Homodimer or homotetramer.

It localises to the cytoplasm. It catalyses the reaction S-adenosyl 3-(methylsulfanyl)propylamine + putrescine = S-methyl-5'-thioadenosine + spermidine + H(+). Its pathway is amine and polyamine biosynthesis; spermidine biosynthesis; spermidine from putrescine: step 1/1. Catalyzes the irreversible transfer of a propylamine group from the amino donor S-adenosylmethioninamine (decarboxy-AdoMet) to putrescine (1,4-diaminobutane) to yield spermidine. The polypeptide is Polyamine aminopropyltransferase (Salmonella typhi).